The sequence spans 70 residues: DNA-directed RNA polymerase subunit epsilon (70 aa).

It belongs to the RNA polymerase subunit epsilon family. RNAP is composed of a core of 2 alpha, a beta and a beta' subunit. The core is associated with a delta subunit, and at least one of epsilon or omega. When a sigma factor is associated with the core the holoenzyme is formed, which can initiate transcription.

The catalysed reaction is RNA(n) + a ribonucleoside 5'-triphosphate = RNA(n+1) + diphosphate. In terms of biological role, a non-essential component of RNA polymerase (RNAP). This Lacticaseibacillus casei (strain BL23) (Lactobacillus casei) protein is DNA-directed RNA polymerase subunit epsilon.